A 282-amino-acid chain; its full sequence is MIYETAPAKINLTLDTLFKRDDGYHEIAMIMTTVDLNDRLSFQKRKDKKIVVDIEHNYVPNDHKNLAYRAAQLMMETYDLNEGVTITIDKDIPVSAGLAGGSADAAATMRGINRLFNLDKSLHELSDLGIQIGTDIPFCIYNRTAVCKGRGEKIRFLKKPPSAWVVLAKPNLGISSADVFKALDLDDAHHVDTEMCEKAIVEGDYKQLCESLSNRLEPVSMSMHPEIKKIKNNMLQCGADGALMSGSGPTVYGLAQKESQAKKIYNAVNGCCNEVYLVRLLG.

The active site involves lysine 9. 93-103 (PVSAGLAGGSA) is a binding site for ATP. The active site involves aspartate 135.

Belongs to the GHMP kinase family. IspE subfamily.

It carries out the reaction 4-CDP-2-C-methyl-D-erythritol + ATP = 4-CDP-2-C-methyl-D-erythritol 2-phosphate + ADP + H(+). In terms of biological role, catalyzes the phosphorylation of the position 2 hydroxy group of 4-diphosphocytidyl-2C-methyl-D-erythritol. The chain is Putative 4-diphosphocytidyl-2-C-methyl-D-erythritol kinase from Staphylococcus haemolyticus (strain JCSC1435).